Here is a 497-residue protein sequence, read N- to C-terminus: Alkene monooxygenase system, oxygenase component subunit alpha (497 aa).

Fe cation is bound by residues Glu-104, Glu-134, His-137, Glu-197, Glu-231, and His-234.

The protein belongs to the TmoA/XamoA family. As to quaternary structure, the alkene monooxygenase multicomponent enzyme system is composed of an electron transfer component and a monooxygenase component interacting with the effector protein XamoD. The electron transfer component is composed of a ferredoxin reductase (XamoF) and a ferredoxin (XamoC), and the monooxygenase component is formed by a heterohexamer (dimer of heterotrimers) of two alpha subunits (XamoA), two beta subunits (XamoE) and two gamma subunits (XamoB). Fe(2+) is required as a cofactor.

It is found in the cytoplasm. The enzyme catalyses propene + NADH + O2 + H(+) = 1,2-epoxypropane + NAD(+) + H2O. Inhibited by propyne. Functionally, component of the alkene monooxygenase multicomponent enzyme system which catalyzes the O2- and NADH-dependent epoxidation of short chain (C2 to C6) alkenes to their corresponding epoxides. Also able to catalyze the oxidation of a number of chlorinated alkenes, including trichloroethylene, cis- and trans-1,2-dichloroethylene, vinyl chloride, 1-chloropropylene, 1,3-dichloropropylene and 2,3-dichloropropylene. This chain is Alkene monooxygenase system, oxygenase component subunit alpha, found in Xanthobacter autotrophicus (strain ATCC BAA-1158 / Py2).